The sequence spans 173 residues: dCTP deaminase, dUMP-forming (173 aa).

Residues R93–R98, D111, T119–E121, Q138, and Y151 each bind dCTP. E121 acts as the Proton donor/acceptor in catalysis.

This sequence belongs to the dCTP deaminase family. Homotrimer.

The catalysed reaction is dCTP + 2 H2O = dUMP + NH4(+) + diphosphate. It functions in the pathway pyrimidine metabolism; dUMP biosynthesis; dUMP from dCTP: step 1/1. Its function is as follows. Bifunctional enzyme that catalyzes both the deamination of dCTP to dUTP and the hydrolysis of dUTP to dUMP without releasing the toxic dUTP intermediate. The polypeptide is dCTP deaminase, dUMP-forming (Clostridium botulinum (strain Alaska E43 / Type E3)).